The primary structure comprises 500 residues: MTGYILAIDQGTTSSRAVIFDGAMKIVAVGQKEFPQHYPASGWVEHDPEDIWKSVVATVKTALRKAKLEASRITAIGITNQRETAVIWDRATGMPIHNAIVWQDRRTAPLCAKLKKAGLEPKFTRKTGLLLDPYFSGTKFAWLLDNVKGARRRAEKGELLAGTIDTYLIWRLTGGRMHATDATNASRTLLYNISKNAWDADLLKILRIPTALLPEVKDCAAEFGVTEKKIFGAEIPILGVAGDQQAATIGQACFEPGMLKSTYGTGCFAVLNTGERLIRSKNRLLSTIAYRLDGKTTYALEGSIFIAGAAVQWLRDGIKVIGKAAESGALAERSDETQQIYLVPAFVGLGAPHWDADARGAIFGLTRNSGPAEFARAALESVAYQTHDLLVAMKRDCGNTFGKTVLRVDGGMVASSWTMQCLADILDAPVDSPTITETTALGAAWLAGSKAGIWPDRATFAKSWALERRFEPQMDGRQRKAKLAGWADAVSRTLTARAPC.

ADP is bound at residue Thr12. ATP is bound by residues Thr12, Thr13, and Ser14. Thr12 is a sn-glycerol 3-phosphate binding site. An ADP-binding site is contributed by Arg16. The sn-glycerol 3-phosphate site is built by Arg82, Glu83, Tyr134, and Asp243. 5 residues coordinate glycerol: Arg82, Glu83, Tyr134, Asp243, and Gln244. 2 residues coordinate ADP: Thr265 and Gly308. Positions 265, 308, 312, and 411 each coordinate ATP. Gly411 contacts ADP.

The protein belongs to the FGGY kinase family.

The catalysed reaction is glycerol + ATP = sn-glycerol 3-phosphate + ADP + H(+). The protein operates within polyol metabolism; glycerol degradation via glycerol kinase pathway; sn-glycerol 3-phosphate from glycerol: step 1/1. Its activity is regulated as follows. Inhibited by fructose 1,6-bisphosphate (FBP). Key enzyme in the regulation of glycerol uptake and metabolism. Catalyzes the phosphorylation of glycerol to yield sn-glycerol 3-phosphate. The polypeptide is Glycerol kinase (Chelativorans sp. (strain BNC1)).